A 318-amino-acid chain; its full sequence is Basic leucine zipper (bZIP) transcription factor atfB (318 aa).

The segment at 114–157 is disordered; that stretch reads FNSSPPEYAPPKHRSSLSEQSQTDGYGVSTRRRKASAIDQCEQQ. The segment at 160–199 is basic motif; it reads REKREKFLERNRLAASKCRQKKKEHTKLLETRFREVSNKK. The region spanning 160 to 223 is the bZIP domain; it reads REKREKFLER…LNLKNEMLRH (64 aa). Residues 202–216 form a leucine-zipper region; the sequence is LESEIEHLRSEVLNL. The segment at 275-301 is disordered; it reads DGPMQLPSEMGSPLDQRRDSEQSIMTE.

This sequence belongs to the bZIP family. ATF subfamily.

The protein resides in the nucleus. Its function is as follows. Transcription factor that acts as a key player in the regulatory circuit that integrates secondary metabolism and cellular response to oxidative stress. Regulates the genes involved in development and stress response through direct binding to their promoters. The sequence is that of Basic leucine zipper (bZIP) transcription factor atfB from Aspergillus flavus (strain ATCC 200026 / FGSC A1120 / IAM 13836 / NRRL 3357 / JCM 12722 / SRRC 167).